The primary structure comprises 289 residues: E3 ubiquitin-protein ligase MARCHF5 (289 aa).

An RING-CH-type zinc finger spans residues 4-73; sequence VDEPPEKHCW…PQCGTEYRIV (70 aa). Residues C12, C15, C31, C33, H41, C44, C63, and C66 each contribute to the Zn(2+) site. A run of 4 helical transmembrane segments spans residues 97-117, 137-157, 202-222, and 236-256; these read FAAAGVVVGTVYWSAVTYGAV, PLFLLMGLPTIPVMLVLGKMI, LSVSRTLCGALIFPSIANLVG, and TILGGIAFVVMKGVLKVYFKQ.

It localises to the mitochondrion outer membrane. The protein localises to the endoplasmic reticulum membrane. The enzyme catalyses S-ubiquitinyl-[E2 ubiquitin-conjugating enzyme]-L-cysteine + [acceptor protein]-L-lysine = [E2 ubiquitin-conjugating enzyme]-L-cysteine + N(6)-ubiquitinyl-[acceptor protein]-L-lysine.. It functions in the pathway protein modification; protein ubiquitination. Functionally, mitochondrial E3 ubiquitin-protein ligase that plays a crucial role in the control of mitochondrial morphology by acting as a positive regulator of mitochondrial fission. May play a role in the prevention of cell senescence acting as a regulator of mitochondrial quality control. The protein is E3 ubiquitin-protein ligase MARCHF5 (marchf5) of Danio rerio (Zebrafish).